We begin with the raw amino-acid sequence, 201 residues long: Holliday junction branch migration complex subunit RuvA (201 aa).

The domain I stretch occupies residues 1–64 (MYEYIRGQFQ…EDFIGLYGFT (64 aa)). The interval 65–143 (TKEELEMFKL…PDELTSEEEQ (79 aa)) is domain II. The segment at 144 to 152 (LIEGINDNS) is flexible linker. The segment at 153–201 (DYSFNINETLSALMALGYTEKEAQKALEKVDKTLSIENMIKESLKLLMR) is domain III.

This sequence belongs to the RuvA family. In terms of assembly, homotetramer. Forms an RuvA(8)-RuvB(12)-Holliday junction (HJ) complex. HJ DNA is sandwiched between 2 RuvA tetramers; dsDNA enters through RuvA and exits via RuvB. An RuvB hexamer assembles on each DNA strand where it exits the tetramer. Each RuvB hexamer is contacted by two RuvA subunits (via domain III) on 2 adjacent RuvB subunits; this complex drives branch migration. In the full resolvosome a probable DNA-RuvA(4)-RuvB(12)-RuvC(2) complex forms which resolves the HJ.

Its subcellular location is the cytoplasm. In terms of biological role, the RuvA-RuvB-RuvC complex processes Holliday junction (HJ) DNA during genetic recombination and DNA repair, while the RuvA-RuvB complex plays an important role in the rescue of blocked DNA replication forks via replication fork reversal (RFR). RuvA specifically binds to HJ cruciform DNA, conferring on it an open structure. The RuvB hexamer acts as an ATP-dependent pump, pulling dsDNA into and through the RuvAB complex. HJ branch migration allows RuvC to scan DNA until it finds its consensus sequence, where it cleaves and resolves the cruciform DNA. The polypeptide is Holliday junction branch migration complex subunit RuvA (Clostridium perfringens (strain SM101 / Type A)).